We begin with the raw amino-acid sequence, 211 residues long: MVSRMVSTMLSGLLFWLASGWTPAFAYSPRTPDRVSEADIQRLLHGVMEQLGIARPRVEYPAHQAMNLVGPQSIEGGAHEGLQHLGPFGNIPNIVAELTGDNIPKDFSEDQGYPDPPNPCPVGKTDDGCLENTPDTAEFSREFQLHQHLFDPEHDYPGLGKWNKKLLYEKMKGGERRKRRSVNPYLQGQRLDNVVAKKSVPHFSDEDKDPE.

The N-terminal stretch at Met-1 to Ala-26 is a signal peptide. The tract at residues Asp-106 to Asn-132 is disordered. Cysteines 120 and 129 form a disulfide. A phosphoserine mark is found at Ser-140 and Ser-204. A disordered region spans residues Gly-173–Glu-211.

This sequence belongs to the 7B2 family. In terms of assembly, interacts with PCSK2/PC2 early in the secretory pathway. Dissociation occurs at later stages. Proteolytically cleaved in the Golgi by a furin-like convertase to generate bioactive peptides. Post-translationally, sulfated on tyrosine residues.

The protein localises to the secreted. Its function is as follows. Acts as a molecular chaperone for PCSK2/PC2, preventing its premature activation in the regulated secretory pathway. Binds to inactive PCSK2 in the endoplasmic reticulum and facilitates its transport from there to later compartments of the secretory pathway where it is proteolytically matured and activated. Also required for cleavage of PCSK2 but does not appear to be involved in its folding. Plays a role in regulating pituitary hormone secretion. The C-terminal peptide inhibits PCSK2 in vitro. In Pan troglodytes (Chimpanzee), this protein is Neuroendocrine protein 7B2 (SCG5).